We begin with the raw amino-acid sequence, 131 residues long: Leptin receptor gene-related protein (131 aa).

Transmembrane regions (helical) follow at residues 7 to 27, 32 to 52, 69 to 89, and 100 to 120; these read LVGL…GCAL, VYWP…HFIA, LAYF…IILA, and GLVL…FLVF.

The protein belongs to the OB-RGRP/VPS55 family.

Its subcellular location is the golgi apparatus membrane. It localises to the endosome membrane. Functionally, involved in protein trafficking. May be involved in the down-regulation of membrane protein levels. The chain is Leptin receptor gene-related protein (LEPROT) from Gallus gallus (Chicken).